A 179-amino-acid chain; its full sequence is Natural killer cells antigen CD94 (179 aa).

Residues 1-10 (MAVSRITRWR) are Cytoplasmic-facing. Residues 11 to 31 (LMSMFFGIKCLFLIVALGVLV) form a helical; Signal-anchor for type II membrane protein membrane-spanning segment. The Extracellular segment spans residues 32-179 (KNSFTIQNIQ…NRFICKQLPT (148 aa)). Intrachain disulfides connect Cys-58–Cys-70, Cys-61–Cys-72, Cys-89–Cys-174, and Cys-152–Cys-166. The C-type lectin domain maps to 68–175 (HQCSCYFISK…CENKNRFICK (108 aa)). Asn-93 is a glycosylation site (N-linked (GlcNAc...) asparagine).

As to quaternary structure, can form disulfide-bonded heterodimer with NKG2 family members KLRC1 and KLRC2. KLRD1-KLRC1 heterodimer interacts with peptide-bound MHC-E-B2M heterotrimeric complex. KLRD1 plays a prominent role in directly interacting with MHC-E. KLRD1-KLRC1 interacts with much higher affinity with peptide-bound MHC-E-B2M than KLRD1-KLRC2. Interacts with the adapter protein TYROBP/DAP12; this interaction is required for cell surface expression and cell activation.

The protein resides in the cell membrane. In terms of biological role, immune receptor involved in self-nonself discrimination. In complex with KLRC1 or KLRC2 on cytotoxic and regulatory lymphocyte subsets, recognizes non-classical major histocompatibility (MHC) class Ib molecule MHC-E loaded with self-peptides derived from the signal sequence of classical MHC class Ia and non-classical MHC class Ib molecules. Enables cytotoxic cells to monitor the expression of MHC class I molecules in healthy cells and to tolerate self. Primarily functions as a ligand binding subunit as it lacks the capacity to signal. Functionally, KLRD1-KLRC1 acts as an immune inhibitory receptor. Key inhibitory receptor on natural killer (NK) cells that regulates their activation and effector functions. Dominantly counteracts T cell receptor signaling on a subset of memory/effector CD8-positive T cells as part of an antigen-driven response to avoid autoimmunity. On intraepithelial CD8-positive gamma-delta regulatory T cells triggers TGFB1 secretion, which in turn limits the cytotoxic programming of intraepithelial CD8-positive alpha-beta T cells, distinguishing harmless from pathogenic antigens. In MHC-E-rich tumor microenvironment, acts as an immune inhibitory checkpoint and may contribute to progressive loss of effector functions of NK cells and tumor-specific T cells, a state known as cell exhaustion. Upon MHC-E-peptide binding, transmits intracellular signals through KLRC1 immunoreceptor tyrosine-based inhibition motifs (ITIMs) by recruiting INPP5D/SHIP-1 and INPPL1/SHIP-2 tyrosine phosphatases to ITIMs, and ultimately opposing signals transmitted by activating receptors through dephosphorylation of proximal signaling molecules. Its function is as follows. KLRD1-KLRC2 acts as an immune activating receptor. On cytotoxic lymphocyte subsets recognizes MHC-E loaded with signal sequence-derived peptides from non-classical MHC class Ib MHC-G molecules, likely playing a role in the generation and effector functions of adaptive NK cells and in maternal-fetal tolerance during pregnancy. Regulates the effector functions of terminally differentiated cytotoxic lymphocyte subsets, and in particular may play a role in adaptive NK cell response to viral infection. Upon MHC-E-peptide binding, transmits intracellular signals via the adapter protein TYROBP/DAP12, triggering the phosphorylation of proximal signaling molecules and cell activation. The chain is Natural killer cells antigen CD94 (Klrd1) from Rattus norvegicus (Rat).